The primary structure comprises 117 residues: MTHAHITSWLITIVLFFLAVSMERQGAGKAKIVQMVLRLFYILTIVTGLLLLHSIASISALYWLKALAGLWVIGAMEMVLAAEKKGKSAAARWTQWVIALAVTLFLGLLLPLGFDLF.

4 helical membrane-spanning segments follow: residues 1–21 (MTHA…LAVS), 39–59 (LFYI…ASIS), 60–80 (ALYW…EMVL), and 97–117 (VIAL…FDLF).

The protein belongs to the UPF0344 family.

The protein resides in the cell membrane. The protein is UPF0344 protein GK0697 of Geobacillus kaustophilus (strain HTA426).